Reading from the N-terminus, the 609-residue chain is GDP-Man:Man(3)GlcNAc(2)-PP-Dol alpha-1,2-mannosyltransferase (609 aa).

Met1 is a topological domain (lumenal). Residues 2–22 (YLILLVVLAVYVTYKLITTVL) traverse the membrane as a helical segment. Over 23-195 (PHHLLIPSQN…NLIDGNYWKH (173 aa)) the chain is Cytoplasmic. Positions 196-216 (FTLIGQLFGGILLSLEAMYEL) form an intramembrane region, helical. Residues 217-455 (SPDVWIDTMG…FGLNAMWNEH (239 aa)) are Cytoplasmic-facing. The segment at residues 456-476 (FGIGVVEYMARGCTPIVHASA) is an intramembrane region (helical). At 477–609 (GPLLDMIGRN…EKRTKVEQVY (133 aa)) the chain is on the cytoplasmic side.

This sequence belongs to the glycosyltransferase group 1 family.

It is found in the endoplasmic reticulum membrane. The catalysed reaction is an alpha-D-Man-(1-&gt;3)-[alpha-D-Man-(1-&gt;6)]-beta-D-Man-(1-&gt;4)-beta-D-GlcNAc-(1-&gt;4)-alpha-D-GlcNAc-diphospho-di-trans,poly-cis-dolichol + 2 GDP-alpha-D-mannose = an alpha-D-Man-(1-&gt;2)-alpha-D-Man-(1-&gt;2)-alpha-D-Man-(1-&gt;3)-[alpha-D-Man-(1-&gt;6)]-beta-D-Man-(1-&gt;4)-beta-D-GlcNAc-(1-&gt;4)-alpha-D-GlcNAc-diphospho-di-trans,poly-cis-dolichol + 2 GDP + 2 H(+). It functions in the pathway protein modification; protein glycosylation. In terms of biological role, GDP-Man:Man(3)GlcNAc(2)-PP-Dol alpha-1,2-mannosyltransferase that operates in the biosynthetic pathway of dolichol-linked oligosaccharides, the glycan precursors employed in protein asparagine (N)-glycosylation. The assembly of dolichol-linked oligosaccharides begins on the cytosolic side of the endoplasmic reticulum membrane and finishes in its lumen. The sequential addition of sugars to dolichol pyrophosphate produces dolichol-linked oligosaccharides containing fourteen sugars, including two GlcNAcs, nine mannoses and three glucoses. Once assembled, the oligosaccharide is transferred from the lipid to nascent proteins by oligosaccharyltransferases. Catalyzes, on the cytoplasmic face of the endoplasmic reticulum, the addition of the fourth and fifth mannose residues to the dolichol-linked oligosaccharide chain, to produce Man(5)GlcNAc(2)-PP-dolichol core oligosaccharide. This chain is GDP-Man:Man(3)GlcNAc(2)-PP-Dol alpha-1,2-mannosyltransferase (ALG11), found in Candida albicans (strain SC5314 / ATCC MYA-2876) (Yeast).